Here is a 224-residue protein sequence, read N- to C-terminus: Urease accessory protein UreF (224 aa).

Belongs to the UreF family. UreD, UreF and UreG form a complex that acts as a GTP-hydrolysis-dependent molecular chaperone, activating the urease apoprotein by helping to assemble the nickel containing metallocenter of UreC. The UreE protein probably delivers the nickel.

It localises to the cytoplasm. Functionally, required for maturation of urease via the functional incorporation of the urease nickel metallocenter. The polypeptide is Urease accessory protein UreF (Escherichia coli O157:H7).